Reading from the N-terminus, the 473-residue chain is Glutamate--tRNA ligase (473 aa).

Positions 13–23 (PSPTGFLHVGG) match the 'HIGH' region motif. A 'KMSKS' region motif is present at residues 240–244 (KLSKR). An ATP-binding site is contributed by K243.

Belongs to the class-I aminoacyl-tRNA synthetase family. Glutamate--tRNA ligase type 1 subfamily. In terms of assembly, monomer.

Its subcellular location is the cytoplasm. The catalysed reaction is tRNA(Glu) + L-glutamate + ATP = L-glutamyl-tRNA(Glu) + AMP + diphosphate. Its function is as follows. Catalyzes the attachment of glutamate to tRNA(Glu) in a two-step reaction: glutamate is first activated by ATP to form Glu-AMP and then transferred to the acceptor end of tRNA(Glu). In Shewanella denitrificans (strain OS217 / ATCC BAA-1090 / DSM 15013), this protein is Glutamate--tRNA ligase.